A 276-amino-acid chain; its full sequence is Syntaxin-12 (276 aa).

N-acetylserine is present on S2. At 2-248 the chain is on the cytoplasmic side; that stretch reads SYGPLDMYRN…RAAYYQKKSR (247 aa). Residues 33–131 are a coiled coil; sequence IQRISQATAQ…RRVSEKEKES (99 aa). Phosphoserine occurs at positions 139, 142, 218, and 225. Positions 178 to 240 constitute a t-SNARE coiled-coil homology domain; sequence LELIKERETA…ERATEQLQRA (63 aa). Residues 249-269 traverse the membrane as a helical; Anchor for type IV membrane protein segment; that stretch reads KKMCILVLVLSVIIVILGLII. Over 270–276 the chain is Vesicular; sequence WLVYKTK.

This sequence belongs to the syntaxin family. Associates with the BLOC-1 complex. Interacts with BLOC1S6. Interacts with NAPA and SNAP23. Identified in a complex containing STX6, STX12, VAMP4 and VTI1A. Interacts with GRIPAP1. Forms a complex with GRIP1, GRIA2 and NSG1; controls the intracellular fate of AMPAR and the endosomal sorting of the GRIA2 subunit toward recycling and membrane targeting. Interacts with NSG1. Interacts with TPC1. Interacts (via N-terminus) with VPS13B.

The protein localises to the endosome membrane. Its subcellular location is the golgi apparatus membrane. The protein resides in the endomembrane system. It is found in the early endosome membrane. It localises to the recycling endosome membrane. Its function is as follows. SNARE promoting fusion of transport vesicles with target membranes. Together with SNARE STX6, promotes movement of vesicles from endosomes to the cell membrane, and may therefore function in the endocytic recycling pathway. Through complex formation with GRIP1, GRIA2 and NSG1 controls the intracellular fate of AMPAR and the endosomal sorting of the GRIA2 subunit toward recycling and membrane targeting. The polypeptide is Syntaxin-12 (STX12) (Pongo abelii (Sumatran orangutan)).